Reading from the N-terminus, the 578-residue chain is Dapdiamide synthesis protein DdaD (578 aa).

One can recognise a Carrier domain in the interval 498 to 573 (ESISATEHQI…KMAAWLDASS (76 aa)). Position 533 is an O-(pantetheine 4'-phosphoryl)serine (Ser-533).

It belongs to the ATP-dependent AMP-binding enzyme family. Pantetheine 4'-phosphate serves as cofactor.

It participates in antibiotic biosynthesis. Its function is as follows. Involved in dapdiamide antibiotics biosynthesis. Activates and sequesters N-beta-fumaramoyl-DAP as a covalently tethered thioester for subsequent oxidative modification of the fumaramoyl group. The protein is Dapdiamide synthesis protein DdaD of Enterobacter agglomerans (Erwinia herbicola).